A 255-amino-acid chain; its full sequence is NAP1-related protein 2 (255 aa).

Positions 19 to 60 (IDAELVLSIEKLQEIQDDLEKINEKASDEVLEVEQKYNVIRK) form a coiled coil. The disordered stretch occupies residues 213-255 (NPLTYFNNDADEEDFDGDDDGDEEEKEGDSDEDDDEEDEVGEE). Over residues 221 to 255 (DADEEDFDGDDDGDEEEKEGDSDEDDDEEDEVGEE) the composition is skewed to acidic residues.

This sequence belongs to the nucleosome assembly protein (NAP) family. Can form homomeric and heteromeric protein complexes with NRP1. Binds histones H2A and H2B and associates with chromatin in vivo. As to expression, ubiquitous.

The protein localises to the cytoplasm. The protein resides in the nucleus. Functionally, acts as a histone H2A/H2B chaperone in nucleosome assembly, playing a critical role for the correct expression of genes involved in root proliferation and patterning. Required with NRP1 for the maintenance of cell proliferation and differentiation in postembryonic root growth. Involved in both intramolecular and intermolecular somatic homologous recombination. The sequence is that of NAP1-related protein 2 (NRP2) from Arabidopsis thaliana (Mouse-ear cress).